The sequence spans 240 residues: UDP-2,3-diacylglucosamine hydrolase (240 aa).

Aspartate 8, histidine 10, aspartate 41, asparagine 79, and histidine 114 together coordinate Mn(2+). 79-80 (NR) contributes to the substrate binding site. 5 residues coordinate substrate: aspartate 122, serine 160, asparagine 164, lysine 167, and histidine 195. Mn(2+)-binding residues include histidine 195 and histidine 197.

It belongs to the LpxH family. Mn(2+) serves as cofactor.

The protein resides in the cell inner membrane. It catalyses the reaction UDP-2-N,3-O-bis[(3R)-3-hydroxytetradecanoyl]-alpha-D-glucosamine + H2O = 2-N,3-O-bis[(3R)-3-hydroxytetradecanoyl]-alpha-D-glucosaminyl 1-phosphate + UMP + 2 H(+). Its pathway is glycolipid biosynthesis; lipid IV(A) biosynthesis; lipid IV(A) from (3R)-3-hydroxytetradecanoyl-[acyl-carrier-protein] and UDP-N-acetyl-alpha-D-glucosamine: step 4/6. In terms of biological role, hydrolyzes the pyrophosphate bond of UDP-2,3-diacylglucosamine to yield 2,3-diacylglucosamine 1-phosphate (lipid X) and UMP by catalyzing the attack of water at the alpha-P atom. Involved in the biosynthesis of lipid A, a phosphorylated glycolipid that anchors the lipopolysaccharide to the outer membrane of the cell. This Escherichia coli O157:H7 protein is UDP-2,3-diacylglucosamine hydrolase.